We begin with the raw amino-acid sequence, 908 residues long: MSEPATSFTPEIPSALPSIPADATPMMAQYLEIKARWPEALLFYRMGDFYELFFEDAVAASAALDIALTKRGKHLGEDIPMCGVPVHSHDAYLQRLIRKGFKVAVCEQVEDPAEAKKRGAKSVVARAVARLVTPGTLTEDTLLDARAHNYLAALSRTGAEAGFGLAWVDVSTGDFAVTSLAPVALGAELARLSPGELLLPETLDEDEDLAALLAQSGAALTRLPAIRFESGQAERRLKSHLGVSALDGFGAFARAELGAMGALLDYVELTQVGRMPALMPPRRVAATDTMAIDAATRANLELVRTLQGETAGSLLATMDRTVTGAGARELASRLAAPLTDPAAVNRRLDAVEWFHDARDMRARLRAGLKSAPDIARALSRLSLGRGGPRDLAAIANGLAAAHGLCAALDGASPSLLPLPEEIARECEAMRGTAASLQSRLAAMLAEELPLLARDGGFIARGASPELDETRALRDDARKLIAGLQAKYAGESGIAALKIRHNNVLGYYIEVPPRHGEKLLAPPFSDSYIHRQTMANAMRFTTAELAGLASRIAEAAGRALEIELALFDELAAATLLEAPSLSRAAEALARLDATAALAELAAERRYVRPRLDASFAFDIRGGRHPVVEAALARTGQAFVPNDTSLSAESGGGKHIWLLTGPNMAGKSTFLRQNALIAIMAQMGSFVPADEAHIGVVDRLFSRVGAADDLARGRSTFMVEMVETAAILNQAGERSLVILDEIGRGTATFDGLSIAWATVEHLHGVNKSRALFATHYHELTALSEKLAHLANATMRVKEWQGDVVFLHEVAPGAADRSYGIQVAKLAGLPAPVIARAQSVLAALEEGGNHEARTKLIDDLPLFSATAKPAPAVKVSAAEEELKNLNPDELSPKQALELLYKLKALAAKDGE.

Residue 659–666 (GPNMAGKS) coordinates ATP.

Belongs to the DNA mismatch repair MutS family.

In terms of biological role, this protein is involved in the repair of mismatches in DNA. It is possible that it carries out the mismatch recognition step. This protein has a weak ATPase activity. The protein is DNA mismatch repair protein MutS of Parvibaculum lavamentivorans (strain DS-1 / DSM 13023 / NCIMB 13966).